The chain runs to 443 residues: ATP-dependent protease ATPase subunit HslU (443 aa).

ATP-binding positions include Ile-18, 60–65 (GVGKTE), Asp-256, Glu-321, and Arg-393.

Belongs to the ClpX chaperone family. HslU subfamily. In terms of assembly, a double ring-shaped homohexamer of HslV is capped on each side by a ring-shaped HslU homohexamer. The assembly of the HslU/HslV complex is dependent on binding of ATP.

It is found in the cytoplasm. In terms of biological role, ATPase subunit of a proteasome-like degradation complex; this subunit has chaperone activity. The binding of ATP and its subsequent hydrolysis by HslU are essential for unfolding of protein substrates subsequently hydrolyzed by HslV. HslU recognizes the N-terminal part of its protein substrates and unfolds these before they are guided to HslV for hydrolysis. This Citrobacter koseri (strain ATCC BAA-895 / CDC 4225-83 / SGSC4696) protein is ATP-dependent protease ATPase subunit HslU.